An 883-amino-acid polypeptide reads, in one-letter code: Aldehyde-alcohol dehydrogenase (883 aa).

An aldehyde dehydrogenase region spans residues 13–456 (KLVAEKHVDE…DNVSAINLLN (444 aa)). NAD(+) is bound by residues 121-126 (ITPTTN), Gly206, and Gly224. Cys257 acts as the Nucleophile in catalysis. NAD(+)-binding positions include Glu355, Leu435, and 438–443 (GSYGRN). Positions 457–464 (IKKVGRRR) are linker. Residues Asp500, Asp534, 561 to 565 (GSPMD), 612 to 613 (TT), Val625, Lys634, and Leu653 contribute to the NAD(+) site. The Fe cation site is built by Asp668, His672, His736, and His750.

It in the N-terminal section; belongs to the aldehyde dehydrogenase family. This sequence in the C-terminal section; belongs to the iron-containing alcohol dehydrogenase family. Requires Fe(2+) as cofactor.

It carries out the reaction ethanol + NAD(+) = acetaldehyde + NADH + H(+). The catalysed reaction is an aldehyde + NAD(+) + H2O = a carboxylate + NADH + 2 H(+). In terms of biological role, has alcohol dehydrogenase activity. Has aldehyde dehydrogenase activity. May play a role in enhancing virulence in mice. May be considered a potential virulence factor. This Streptococcus pneumoniae serotype 4 (strain ATCC BAA-334 / TIGR4) protein is Aldehyde-alcohol dehydrogenase.